The chain runs to 330 residues: MDIYNDKGLQTIKLFNNEFDCIRNDIRELFKHVTDSDSIQLPMEDNSDIIENIRKILYRRLKNVECVDIDSTITFMKYDPNDDNKRTCSNWVPLTNNYMEYCLVIYLETPICGGKIKLYHPTGNIKSDKDIMFAKTLDFKSKKVLTGRKTIAVLDISVSYNRSMTTIHYGDVDIDIHTDKNGKELCYCYITIDDHYLVNVETIGVIVNRSGKCLLVNNHLGIGIVKDKRISDSFGDVCMDTIFDFSEARELFSLTNDDNRNIAWDTDKLDDDTDIWTPVTEDDYKFLSRLVLYAKSQSDTVFDHYVLTGDTEPPTVFIFKVTRFYFNILK.

It belongs to the poxviridae C4/C10 protein family.

In Homo sapiens (Human), this protein is Protein C10.